The primary structure comprises 141 residues: Hemoglobin subunit alpha-A (141 aa).

Residues 1–141 (VLSSGDKANV…VSTVLTSKYR (141 aa)) enclose the Globin domain. His-58 provides a ligand contact to O2. His-87 contributes to the heme b binding site.

The protein belongs to the globin family. As to quaternary structure, heterotetramer of two alpha chains and two beta chains. In terms of tissue distribution, red blood cells.

Functionally, involved in oxygen transport from the lung to the various peripheral tissues. The polypeptide is Hemoglobin subunit alpha-A (HBAA) (Caretta caretta (Loggerhead sea turtle)).